A 155-amino-acid polypeptide reads, in one-letter code: Endoribonuclease YbeY (155 aa).

The Zn(2+) site is built by histidine 114, histidine 118, and histidine 124.

The protein belongs to the endoribonuclease YbeY family. Zn(2+) is required as a cofactor.

The protein localises to the cytoplasm. Functionally, single strand-specific metallo-endoribonuclease involved in late-stage 70S ribosome quality control and in maturation of the 3' terminus of the 16S rRNA. The sequence is that of Endoribonuclease YbeY from Escherichia coli O1:K1 / APEC.